We begin with the raw amino-acid sequence, 420 residues long: Phosphoglycerate kinase (420 aa).

Residues valine 24, aspartate 25, phenylalanine 26, asparagine 27, arginine 40, serine 63, histidine 64, glycine 66, arginine 67, leucine 122, arginine 123, histidine 170, and arginine 171 each coordinate (2R)-3-phosphoglycerate. Position 214 (glycine 214) interacts with ADP. A CDP-binding site is contributed by glycine 214. Residues alanine 215 and lysine 216 each contribute to the AMP site. Alanine 215 provides a ligand contact to ATP. Alanine 215 lines the Mg(2+) pocket. Aspartate 219 contacts CDP. Aspartate 219 lines the Mg(2+) pocket. Lysine 220 contacts AMP. Lysine 220 is an ATP binding site. Residue glycine 238 participates in ADP binding. Position 238 (glycine 238) interacts with CDP. Positions 239 and 313 each coordinate AMP. ATP-binding residues include glycine 239 and glycine 313. Residues glycine 338 and phenylalanine 343 each coordinate CDP. Phenylalanine 343 contacts ADP. Position 344 (glutamate 344) interacts with AMP. ATP contacts are provided by glutamate 344, aspartate 375, and threonine 376. Aspartate 375 serves as a coordination point for Mg(2+).

Belongs to the phosphoglycerate kinase family. As to quaternary structure, monomer. The cofactor is Mg(2+).

It carries out the reaction (2R)-3-phosphoglycerate + ATP = (2R)-3-phospho-glyceroyl phosphate + ADP. It participates in carbohydrate degradation; glycolysis; pyruvate from D-glyceraldehyde 3-phosphate: step 2/5. In Tetrahymena thermophila, this protein is Phosphoglycerate kinase (PGK).